The primary structure comprises 318 residues: Aspartate carbamoyltransferase catalytic subunit (318 aa).

Residues Arg-58 and Thr-59 each contribute to the carbamoyl phosphate site. L-aspartate is bound at residue Lys-86. Positions 108, 141, and 144 each coordinate carbamoyl phosphate. Positions 174 and 226 each coordinate L-aspartate. Positions 270 and 271 each coordinate carbamoyl phosphate.

It belongs to the aspartate/ornithine carbamoyltransferase superfamily. ATCase family. Heterododecamer (2C3:3R2) of six catalytic PyrB chains organized as two trimers (C3), and six regulatory PyrI chains organized as three dimers (R2).

It carries out the reaction carbamoyl phosphate + L-aspartate = N-carbamoyl-L-aspartate + phosphate + H(+). It functions in the pathway pyrimidine metabolism; UMP biosynthesis via de novo pathway; (S)-dihydroorotate from bicarbonate: step 2/3. Catalyzes the condensation of carbamoyl phosphate and aspartate to form carbamoyl aspartate and inorganic phosphate, the committed step in the de novo pyrimidine nucleotide biosynthesis pathway. This chain is Aspartate carbamoyltransferase catalytic subunit, found in Lactobacillus delbrueckii subsp. bulgaricus (strain ATCC 11842 / DSM 20081 / BCRC 10696 / JCM 1002 / NBRC 13953 / NCIMB 11778 / NCTC 12712 / WDCM 00102 / Lb 14).